The sequence spans 267 residues: Proenkephalin-A (267 aa).

The signal sequence occupies residues 1–24; sequence MARFLTLCTWLLLLGPGLLATVRA. Disulfide bonds link cysteine 26–cysteine 48, cysteine 30–cysteine 52, and cysteine 33–cysteine 65. Residues 163–175 show a composition bias toward basic and acidic residues; the sequence is TGDNRERSHHQDG. Residues 163-182 form a disordered region; sequence TGDNRERSHHQDGSDNEEEV. 2 consecutive propeptides follow at residues 196–207 and 217–227; these read SPQLEDEAKELQ and VGRPEWWMDYQ. Serine 251 is modified (phosphoserine).

It belongs to the opioid neuropeptide precursor family. Proenkephalin-A is cleaved by CTSL to generate Met-enkephalin. In terms of processing, processed and degraded by ACE. Post-translationally, probably cleaved by ACE. Processed by ACE to generate Met-enkephalin in the nucleus accumbens of the brain. In terms of processing, the N-terminal domain contains 6 conserved cysteines thought to be involved in disulfide bonding and/or processing.

It localises to the cytoplasmic vesicle. The protein localises to the secretory vesicle. The protein resides in the chromaffin granule lumen. Its subcellular location is the secreted. Neuropeptide that competes with and mimic the effects of opiate drugs. They play a role in a number of physiologic functions, including pain perception and responses to stress. Its function is as follows. Met-enkephalin-Arg-Phe neuropeptide acts as a strong ligand of Mu-type opioid receptor OPRM1. Met-enkephalin-Arg-Phe-binding to OPRM1 in the nucleus accumbens of the brain increases activation of OPRM1, leading to long-term synaptic depression of glutamate release. Functionally, increases glutamate release in the striatum and decreases GABA concentration in the striatum. In terms of biological role, increases glutamate release in the striatum. The chain is Proenkephalin-A from Homo sapiens (Human).